Consider the following 208-residue polypeptide: MIVIIDYDTGNTKSISKALDFIGLQNKISSDATEISQADGVILPGVGAYPEAMKELTRRGLNKTLKEIAAGGKPILGVCLGMQLLLESSNEHSFTNGLGLIPGHVEKLPEDPEFAVPHMGWNQLQIKRATPLTKQLDGEYVYYVHSYYANCPEEYIIATSGYSIEVPGMINKGNIYGAQFHPEKSGQIGLEILKGFKEVTYSCKSSQQ.

Positions 1-206 constitute a Glutamine amidotransferase type-1 domain; sequence MIVIIDYDTG…KEVTYSCKSS (206 aa). The active-site Nucleophile is Cys-79. Active-site residues include His-181 and Glu-183.

Heterodimer of HisH and HisF.

It is found in the cytoplasm. It catalyses the reaction 5-[(5-phospho-1-deoxy-D-ribulos-1-ylimino)methylamino]-1-(5-phospho-beta-D-ribosyl)imidazole-4-carboxamide + L-glutamine = D-erythro-1-(imidazol-4-yl)glycerol 3-phosphate + 5-amino-1-(5-phospho-beta-D-ribosyl)imidazole-4-carboxamide + L-glutamate + H(+). The catalysed reaction is L-glutamine + H2O = L-glutamate + NH4(+). It participates in amino-acid biosynthesis; L-histidine biosynthesis; L-histidine from 5-phospho-alpha-D-ribose 1-diphosphate: step 5/9. In terms of biological role, IGPS catalyzes the conversion of PRFAR and glutamine to IGP, AICAR and glutamate. The HisH subunit catalyzes the hydrolysis of glutamine to glutamate and ammonia as part of the synthesis of IGP and AICAR. The resulting ammonia molecule is channeled to the active site of HisF. This Listeria monocytogenes serovar 1/2a (strain ATCC BAA-679 / EGD-e) protein is Imidazole glycerol phosphate synthase subunit HisH.